A 429-amino-acid chain; its full sequence is UDP-N-acetylglucosamine 1-carboxyvinyltransferase 2 (429 aa).

Residue 22–23 participates in phosphoenolpyruvate binding; that stretch reads KN. Residue Arg92 participates in UDP-N-acetyl-alpha-D-glucosamine binding. Residue Cys116 is the Proton donor of the active site. Cys116 bears the 2-(S-cysteinyl)pyruvic acid O-phosphothioketal mark. UDP-N-acetyl-alpha-D-glucosamine contacts are provided by residues 121–125, Asp305, and Ile327; that span reads RPIDQ.

Belongs to the EPSP synthase family. MurA subfamily.

It localises to the cytoplasm. The enzyme catalyses phosphoenolpyruvate + UDP-N-acetyl-alpha-D-glucosamine = UDP-N-acetyl-3-O-(1-carboxyvinyl)-alpha-D-glucosamine + phosphate. The protein operates within cell wall biogenesis; peptidoglycan biosynthesis. In terms of biological role, cell wall formation. Adds enolpyruvyl to UDP-N-acetylglucosamine. This Bacillus subtilis (strain 168) protein is UDP-N-acetylglucosamine 1-carboxyvinyltransferase 2.